A 315-amino-acid chain; its full sequence is uncharacterized protein (315 aa).

This is an uncharacterized protein from Bos taurus (Bovine).